We begin with the raw amino-acid sequence, 219 residues long: Cytidylate kinase (219 aa).

21–29 provides a ligand contact to ATP; that stretch reads GPAASGKGT.

This sequence belongs to the cytidylate kinase family. Type 1 subfamily.

The protein resides in the cytoplasm. The catalysed reaction is CMP + ATP = CDP + ADP. It carries out the reaction dCMP + ATP = dCDP + ADP. This is Cytidylate kinase from Rickettsia africae (strain ESF-5).